A 705-amino-acid polypeptide reads, in one-letter code: Dolichyl-diphosphooligosaccharide--protein glycosyltransferase subunit STT3A (705 aa).

Residues 1–17 (MTKLGFLRLSYEKQDTL) lie on the Cytoplasmic side of the membrane. The helical transmembrane segment at 18 to 38 (LKLLILSMAAVLSFSTRLFAV) threads the bilayer. Residues 39–119 (LRFESVIHEF…IDIRNVCVFL (81 aa)) are Lumenal-facing. Positions 47–49 (EFD) match the DXD motif 1 motif. Aspartate 49 serves as a coordination point for Mn(2+). A helical transmembrane segment spans residues 120–138 (APLFSSFTTIVTYHLTKEL). Over 139–140 (KD) the chain is Cytoplasmic. The helical transmembrane segment at 141–158 (AGAGLLAAAMIAVVPGYI) threads the bilayer. At 159–169 (SRSVAGSYDNE) the chain is on the lumenal side. Residues aspartate 167 and glutamate 169 each coordinate Mn(2+). The short motif at 167-169 (DNE) is the DXD motif 2 element. The chain crosses the membrane as a helical span at residues 170–189 (GIAIFCMLLTYYMWIKAVKT). The Cytoplasmic portion of the chain corresponds to 190 to 191 (GS). A helical transmembrane segment spans residues 192–206 (IYWAAKCALAYFYMV). At 207–211 (SSWGG) the chain is on the lumenal side. The helical transmembrane segment at 212–228 (YVFLINLIPLHVLVLML) threads the bilayer. At 229–233 (TGRFS) the chain is on the cytoplasmic side. Residues 234–259 (HRIYVAYCTVYCLGTILSMQISFVGF) form a helical membrane-spanning segment. Residues 260–267 (QPVLSSEH) are Lumenal-facing. Residues 268 to 287 (MAAFGVFGLCQIHAFVDYLR) form a helical membrane-spanning segment. The Cytoplasmic portion of the chain corresponds to 288–300 (SKLNPQQFEVLFR). A helical transmembrane segment spans residues 301–321 (SVISLVGFVLLTIGALLMLTG). The Lumenal segment spans residues 322-356 (KISPWTGRFYSLLDPSYAKNNIPIIASVSEHQPTT). Residues 348 to 351 (SVSE) carry the SVSE motif motif. A helical membrane pass occupies residues 357–379 (WSSYYFDLQLLVFMFPVGLYYCF). Residues 380 to 385 (SNLSDA) are Cytoplasmic-facing. Residues 386–402 (RIFIIMYGVTSMYFSAV) traverse the membrane as a helical segment. Residues 403–406 (MVRL) lie on the Lumenal side of the membrane. Arginine 405 contributes to the dolichyl diphosphooligosaccharide binding site. A helical transmembrane segment spans residues 407–428 (MLVLAPVMCILSGIGVSQVLST). Residues 429–453 (YMKNLDISRQDKKSKKQQDSTYPIK) are Cytoplasmic-facing. Residues 454-473 (NEVASGMILVMAFFLITYTF) form a helical membrane-spanning segment. The Lumenal portion of the chain corresponds to 474-705 (HSTWVTSEAY…DLDNRGLSRT (232 aa)). An interacts with target acceptor peptide in protein substrate region spans residues 525–527 (WWD). A WWDYG motif motif is present at residues 525–529 (WWDYG). Dolichyl diphosphooligosaccharide is bound at residue tyrosine 530. Asparagine 537 and asparagine 544 each carry an N-linked (GlcNAc...) asparagine glycan. Residue asparagine 548 is glycosylated (N-linked (GlcNAc...) (high mannose) asparagine). The short motif at 592–599 (DINKFLWM) is the DK motif element.

This sequence belongs to the STT3 family. Component of the oligosaccharyltransferase (OST) complex. There are 2 OST complexes, OST-A and OST-B, which contain STT3A or STT3B as catalytic subunit, respectively. OST-A and OST-B contain common core subunits RPN1, RPN2, OST48, OST4, DAD1 and TMEM258, and OST-A contains DC2/OSTC and KRTCAP2/KCP2 specific accessory subunits. OST-A complex assembly occurs through the formation of 3 subcomplexes. Subcomplex 1 contains RPN1 and TMEM258, subcomplex 2 contains the OST-A-specific subunits STT3A, DC2/OSTC, and KCP2 as well as the core subunit OST4, and subcomplex 3 contains RPN2, DAD1, and OST48. The OST-A complex can form stable complexes with the Sec61 complex or with both the Sec61 and TRAP complexes. The cofactor is Mg(2+). Mn(2+) is required as a cofactor.

It localises to the endoplasmic reticulum membrane. It catalyses the reaction a di-trans,poly-cis-dolichyl diphosphooligosaccharide + L-asparaginyl-[protein] = N(4)-(oligosaccharide-(1-&gt;4)-N-acetyl-beta-D-glucosaminyl-(1-&gt;4)-N-acetyl-beta-D-glucosaminyl)-L-asparaginyl-[protein] + a di-trans,poly-cis-dolichyl diphosphate + H(+). It functions in the pathway protein modification; protein glycosylation. Its function is as follows. Catalytic subunit of the oligosaccharyl transferase (OST) complex that catalyzes the initial transfer of a defined glycan (Glc(3)Man(9)GlcNAc(2) in eukaryotes) from the lipid carrier dolichol-pyrophosphate to an asparagine residue within an Asn-X-Ser/Thr consensus motif in nascent polypeptide chains, the first step in protein N-glycosylation. N-glycosylation occurs cotranslationally and the complex associates with the Sec61 complex at the channel-forming translocon complex that mediates protein translocation across the endoplasmic reticulum (ER). All subunits are required for a maximal enzyme activity. This subunit contains the active site and the acceptor peptide and donor lipid-linked oligosaccharide (LLO) binding pockets. STT3A is present in the majority of OST complexes and mediates cotranslational N-glycosylation of most sites on target proteins, while STT3B-containing complexes are required for efficient post-translational glycosylation and mediate glycosylation of sites that have been skipped by STT3A. STT3A-containing OST-A complex is also required to prevent hyperglycosylation of some target proteins by preventing glycosylation of facultative sites before folding of target proteins is completed. This is Dolichyl-diphosphooligosaccharide--protein glycosyltransferase subunit STT3A from Bos taurus (Bovine).